Reading from the N-terminus, the 700-residue chain is Elongation factor G (700 aa).

The 277-residue stretch at 10–286 (TKVRNIGIMA…AVIDYLPNPL (277 aa)) folds into the tr-type G domain. Residues 19 to 26 (AHIDAGKT), 83 to 87 (DTPGH), and 137 to 140 (NKMD) contribute to the GTP site.

It belongs to the TRAFAC class translation factor GTPase superfamily. Classic translation factor GTPase family. EF-G/EF-2 subfamily.

It localises to the cytoplasm. Catalyzes the GTP-dependent ribosomal translocation step during translation elongation. During this step, the ribosome changes from the pre-translocational (PRE) to the post-translocational (POST) state as the newly formed A-site-bound peptidyl-tRNA and P-site-bound deacylated tRNA move to the P and E sites, respectively. Catalyzes the coordinated movement of the two tRNA molecules, the mRNA and conformational changes in the ribosome. The sequence is that of Elongation factor G from Mycolicibacterium vanbaalenii (strain DSM 7251 / JCM 13017 / BCRC 16820 / KCTC 9966 / NRRL B-24157 / PYR-1) (Mycobacterium vanbaalenii).